The chain runs to 359 residues: Proton-gated ion channel (359 aa).

The first 43 residues, 1–43 (MFPTGWRPKLSESIAASRMLWQPMAAVAVVQIGLLWFSPPVWG), serve as a signal peptide directing secretion. Topologically, residues 44–235 (QDMVSPPPPI…LDYQLRISRQ (192 aa)) are periplasmic. A helical transmembrane segment spans residues 236 to 258 (YFSYIPNIILPMLFILFISWTAF). The Cytoplasmic segment spans residues 259-261 (WST). A helical transmembrane segment spans residues 262-286 (SYEANVTLVVSTLIAHIAFNILVET). Topologically, residues 287–294 (NLPKTPYM) are periplasmic. Residues 295 to 323 (TYTGAIIFMIYLFYFVAVIEVTVQHYLKV) form a helical membrane-spanning segment. Residues 324–326 (ESQ) lie on the Cytoplasmic side of the membrane. A helical transmembrane segment spans residues 327-359 (PARAASITRASRIAFPVVFLLANIILAFLFFGF).

The protein belongs to the ligand-gated ion channel (TC 1.A.9) family. In terms of assembly, homopentamer.

Its subcellular location is the cell inner membrane. With respect to regulation, tetraethylammonium (TEA) and tetrabutylammonium (TBA) inhibit the proton-activated currents in a dose- and voltage-dependent manner in vitro, whereas the blocker of acid sensing ion channels, amiloride, has no effect. Channel current of GLIC can be inhibited by inhaled and intravenous general anesthetics at and below concentrations used clinically. Ion conduction is also inhibited by lidocaine and by divalent transition metal ions such as cadmium ions. Its function is as follows. Cationic channel with similar permeabilities for Na(+) and K(+), that is activated by an increase of the proton concentration on the extracellular side. Displays no permeability for chloride ions. Shows slow kinetics of activation, no desensitization and a single channel conductance of 8 pS. Might contribute to adaptation to external pH change. This Gloeobacter violaceus (strain ATCC 29082 / PCC 7421) protein is Proton-gated ion channel (glvI).